The primary structure comprises 454 residues: B-cell lymphoma 3 protein (454 aa).

Positions 1 to 50 are disordered; sequence MPRCPAGAMDEGPVDLRTRPKAAGLPGAALPLRKRPLRAPSPEPAAPRGA. The segment covering 21 to 31 has biased composition (low complexity); it reads KAAGLPGAALP. Serine 41 carries the post-translational modification Phosphoserine. 7 ANK repeats span residues 134 to 163, 171 to 200, 204 to 235, 241 to 270, 275 to 304, 308 to 337, and 338 to 367; these read DGDT…QGGR, LRQT…SPMA, HGQT…TLDL, DGLT…DIDA, SGRS…NVNA, SGSS…DSSL, and KNCH…RPAS. The interval 360–454 is disordered; sequence GKATRPASTS…VPPSPAPGGS (95 aa). The span at 365-381 shows a compositional bias: polar residues; that stretch reads PASTSQPDPSPDRSANT. Serine 374 carries the post-translational modification Phosphoserine. Low complexity predominate over residues 382 to 404; sequence SPESSSRLSSNGLLSASPSSSPS. Phosphoserine; by GSK3 occurs at positions 402 and 406. Over residues 405–418 the composition is skewed to pro residues; sequence QSPPRDPPGFPMAP. Low complexity predominate over residues 432 to 442; sequence LPFAGVLRGPG. Pro residues predominate over residues 443-454; that stretch reads RPVPPSPAPGGS.

In terms of assembly, component of a complex consisting of the NF-kappa-B p52-p52 homodimer and BCL3. Component of a complex consisting of the NF-kappa-B p50-p50 homodimer and BCL3. Interacts with N4BP2, COPS5 and PIR. Interacts with CYLD. Polyubiquitinated. Ubiquitination via 'Lys-63'-linked ubiquitin chains is required for nuclear accumulation. Deubiquitinated by CYLD, which acts on 'Lys-63'-linked ubiquitin chains. Deubiquitination by CYLD prevents nuclear accumulation. Post-translationally, activated by phosphorylation.

Its subcellular location is the nucleus. The protein resides in the cytoplasm. It is found in the perinuclear region. In terms of biological role, contributes to the regulation of transcriptional activation of NF-kappa-B target genes. In the cytoplasm, inhibits the nuclear translocation of the NF-kappa-B p50 subunit. In the nucleus, acts as transcriptional activator that promotes transcription of NF-kappa-B target genes. Contributes to the regulation of cell proliferation. The sequence is that of B-cell lymphoma 3 protein (BCL3) from Homo sapiens (Human).